A 513-amino-acid chain; its full sequence is Mesoderm induction early response protein 1 (513 aa).

The span at 1–16 (MAEPSVESSSPGGSAT) shows a compositional bias: low complexity. The segment at 1–174 (MAEPSVESSS…EEESEEDEDY (174 aa)) is disordered. 2 stretches are compositionally biased toward basic and acidic residues: residues 17-36 (SDDH…FDDE) and 46-63 (EGER…RESD). The segment covering 82–107 (QEDDDDEDEEEEEEEGEDDDDVDNDD) has biased composition (acidic residues). Positions 131-146 (QSSNDDPAPSVASQDP) are enriched in polar residues. Residues 157-261 (YFDTNSEIEE…IKDNEQALYE (105 aa)) form an interaction with HDAC1 region. Residues 162–174 (SEIEEESEEDEDY) show a composition bias toward acidic residues. In terms of domain architecture, ELM2 spans 182 to 280 (KEIMVGSMFQ…ESLRRLRFNV (99 aa)). The SANT domain maps to 285 to 337 (EELSVWTEEECRNFEQGLKVYGKDFHVIQANKVRTRSVGECVAFYYMWKKSER). The segment at 368 to 513 (ESESAASSRA…KLEELETLDD (146 aa)) is disordered. Basic and acidic residues-rich tracts occupy residues 416–425 (PSKDEAKPEG) and 463–476 (SRSE…NERP). The span at 483-500 (NSNGKESPGSSEFFQEAN) shows a compositional bias: polar residues.

The protein localises to the nucleus. Functionally, transcriptional repressor regulating the expression of a number of genes. Probably functions through recruitment of histone deacetylases involved in chromatin silencing. The sequence is that of Mesoderm induction early response protein 1 (MIER1) from Gallus gallus (Chicken).